Consider the following 353-residue polypeptide: tRNA-specific 2-thiouridylase MnmA (353 aa).

ATP is bound by residues 6-13 (GMSGGVDS) and L32. The active-site Nucleophile is the C99. Residues C99 and C197 are joined by a disulfide bond. G124 contacts ATP. An interaction with tRNA region spans residues 147–149 (KDQ). C197 functions as the Cysteine persulfide intermediate in the catalytic mechanism. Residues 303–304 (RY) are interaction with tRNA.

Belongs to the MnmA/TRMU family.

Its subcellular location is the cytoplasm. The catalysed reaction is S-sulfanyl-L-cysteinyl-[protein] + uridine(34) in tRNA + AH2 + ATP = 2-thiouridine(34) in tRNA + L-cysteinyl-[protein] + A + AMP + diphosphate + H(+). Catalyzes the 2-thiolation of uridine at the wobble position (U34) of tRNA, leading to the formation of s(2)U34. This chain is tRNA-specific 2-thiouridylase MnmA, found in Persephonella marina (strain DSM 14350 / EX-H1).